A 665-amino-acid chain; its full sequence is Sodium/glucose cotransporter 1 (665 aa).

Over 1 to 24 (MDSSTLSPAVTATDAPIPSYERIR) the chain is Extracellular. The chain crosses the membrane as a helical span at residues 25–47 (NAADISVIVIYFVVVMAVGLWAM). The Cytoplasmic segment spans residues 48–66 (FSTNRGTVGGFFLAGRSMV). The chain crosses the membrane as a helical span at residues 67 to 90 (WWPIGASLFASNIGSGHFVGLAGT). Over 91-95 (GAAAG) the chain is Extracellular. The helical transmembrane segment at 96–117 (IAMGGFEWNALVLVVVLGWIFV) threads the bilayer. Residues 118-139 (PIYIKAGVVTMPEYLRKRFGGK) are Cytoplasmic-facing. A helical membrane pass occupies residues 140 to 169 (RIQIYLSVLSLLLYIFTKISADIFSGAIFI). Topologically, residues 170-176 (NLALGLD) are extracellular. A helical transmembrane segment spans residues 177–193 (IYLAIFILLAITALYTI). The Cytoplasmic portion of the chain corresponds to 194 to 202 (TGGLAAVIY). Residues 203–221 (TDTLQTAIMLVGSFILTGF) traverse the membrane as a helical segment. The Extracellular segment spans residues 222–275 (AFNEVGGYEAFMDKYMKAIPTKVSNGNFTAKEECYTPRADSFHIFRDPITGDMP). A glycan (N-linked (GlcNAc...) asparagine) is linked at N248. Cystine bridges form between C255/C511, C255/C611, C345/C351, C355/C361, and C517/C522. Residues 276-295 (WPGLIFGLAILALWYWCTDQ) form a helical membrane-spanning segment. The Cytoplasmic portion of the chain corresponds to 296–309 (VIVQRCLSAKNMSH). A helical transmembrane segment spans residues 310 to 331 (VKADCTLCGYLKLLPMFLMVMP). The Extracellular portion of the chain corresponds to 332-375 (GMISRILYTEKIACVLPEECQKYCGTPVGCTNIAYPTLVVELMP). A helical transmembrane segment spans residues 376–406 (NGLRGLMLSVMMASLMSSLTSIFNSASTLFT). The Cytoplasmic portion of the chain corresponds to 407–422 (MDIYTKIRKKASEKEL). The chain crosses the membrane as a helical span at residues 423–444 (MIAGRLFILVLIGISIAWVPIV). The Extracellular segment spans residues 445-451 (QSAQSGQ). The chain crosses the membrane as a helical span at residues 452-477 (LFDYIQSITSYLGPPIAAVFLLAIFC). A D-glucose-binding site is contributed by Q457. The Cytoplasmic portion of the chain corresponds to 478–481 (KRVN). A helical membrane pass occupies residues 482 to 504 (EQGAFWGLILGFLIGISRMITEF). Residues 505–525 (AYGTGSCMEPSNCPKIICGVH) lie on the Extracellular side of the membrane. Residues 526 to 547 (YLYFAIILFVISVITILIISFL) traverse the membrane as a helical segment. The Cytoplasmic portion of the chain corresponds to 548 to 645 (TKPIPDVHLY…TSEKPLWRTV (98 aa)). At S585 the chain carries Phosphoserine. T588 is modified (phosphothreonine). The helical transmembrane segment at 646-663 (VNINGIILLAVAVFCHAY) threads the bilayer. Over 664 to 665 (FA) the chain is Extracellular.

The protein belongs to the sodium:solute symporter (SSF) (TC 2.A.21) family. Post-translationally, N-glycosylation is not necessary for the cotransporter function. In terms of tissue distribution, expressed in enterocytes and enteroendocrine cells of small intestine (at protein level). Expressed in S3 segments of renal proximal tubules (at protein level). Expressed in endometrial glandular and epithelial cells (at protein level).

It is found in the apical cell membrane. It carries out the reaction D-glucose(out) + 2 Na(+)(out) = D-glucose(in) + 2 Na(+)(in). The catalysed reaction is D-galactose(out) + 2 Na(+)(out) = D-galactose(in) + 2 Na(+)(in). Enhanced by the interaction with PDZK1IP1/MAP17; but unlike SLC5A2/SGLT2, PDZK1IP1 is not essential for SLC5A1 transporter activity. Possibly modulated by cholesterol binding. Electrogenic Na(+)-coupled sugar symporter that actively transports D-glucose or D-galactose at the plasma membrane, with a Na(+) to sugar coupling ratio of 2:1. Transporter activity is driven by a transmembrane Na(+) electrochemical gradient set by the Na(+)/K(+) pump. Has a primary role in the transport of dietary monosaccharides from enterocytes to blood. Responsible for the absorption of D-glucose or D-galactose across the apical brush-border membrane of enterocytes, whereas basolateral exit is provided by GLUT2. Additionally, functions as a D-glucose sensor in enteroendocrine cells, triggering the secretion of the incretins GCG and GIP that control food intake and energy homeostasis. Together with SGLT2, functions in reabsorption of D-glucose from glomerular filtrate, playing a nonredundant role in the S3 segment of the proximal tubules. Transports D-glucose into endometrial epithelial cells, controlling glycogen synthesis and nutritional support for the embryo as well as the decidual transformation of endometrium prior to conception. Acts as a water channel enabling passive water transport in response to the osmotic gradient created upon sugar and Na(+) uptake. Has high water conductivity comparable to aquaporins and therefore is expected to play an important role in transepithelial water permeability, especially in the small intestine. This is Sodium/glucose cotransporter 1 (Slc5a1) from Mus musculus (Mouse).